The primary structure comprises 201 residues: Protamine-like protein 99C (201 aa).

Positions 93–143 are disordered; that stretch reads GGQQSSCQRQSPSARLRESERRSSRSKTLCRSAKNRQRGKPKPQQSKRRLS. Polar residues predominate over residues 94–104; sequence GQQSSCQRQSP. Over residues 125–143 the composition is skewed to basic residues; it reads AKNRQRGKPKPQQSKRRLS.

It belongs to the UPF0771 family.

It localises to the nucleus. It is found in the chromosome. Regulates chromatin compaction in spermatid nuclei and is essential for male fertility. Functions in parallel with other chromatin-condensing proteins such as ProtA, ProtB and Mst77F. This Drosophila melanogaster (Fruit fly) protein is Protamine-like protein 99C.